Here is a 451-residue protein sequence, read N- to C-terminus: Tubulin alpha-1/alpha-2 chain (451 aa).

Glutamine 11 contacts GTP. Lysine 40 is modified (N6-acetyllysine). GTP-binding residues include glutamate 71, glycine 144, threonine 145, threonine 179, asparagine 206, and asparagine 228. Residue glutamate 71 coordinates Mg(2+). Residue glutamate 254 is part of the active site.

The protein belongs to the tubulin family. In terms of assembly, dimer of alpha and beta chains. A typical microtubule is a hollow water-filled tube with an outer diameter of 25 nm and an inner diameter of 15 nM. Alpha-beta heterodimers associate head-to-tail to form protofilaments running lengthwise along the microtubule wall with the beta-tubulin subunit facing the microtubule plus end conferring a structural polarity. Microtubules usually have 13 protofilaments but different protofilament numbers can be found in some organisms and specialized cells. It depends on Mg(2+) as a cofactor. Undergoes a tyrosination/detyrosination cycle, the cyclic removal and re-addition of a C-terminal tyrosine residue by the enzymes tubulin tyrosine carboxypeptidase (TTCP) and tubulin tyrosine ligase (TTL), respectively. Post-translationally, acetylation of alpha chains at Lys-40 stabilizes microtubules and affects affinity and processivity of microtubule motors. This modification has a role in multiple cellular functions, ranging from cell motility, cell cycle progression or cell differentiation to intracellular trafficking and signaling.

The protein resides in the cytoplasm. The protein localises to the cytoskeleton. The catalysed reaction is GTP + H2O = GDP + phosphate + H(+). Functionally, tubulin is the major constituent of microtubules, a cylinder consisting of laterally associated linear protofilaments composed of alpha- and beta-tubulin heterodimers. Microtubules grow by the addition of GTP-tubulin dimers to the microtubule end, where a stabilizing cap forms. Below the cap, tubulin dimers are in GDP-bound state, owing to GTPase activity of alpha-tubulin. The chain is Tubulin alpha-1/alpha-2 chain (TUBA1) from Volvox carteri (Green alga).